Consider the following 331-residue polypeptide: Cathepsin S (331 aa).

The signal sequence occupies residues 1–16 (MNWLVWALLLCSSAMA). A propeptide spans 17-114 (HVHRDPTLDH…VTYKSDPNQK (98 aa)) (activation peptide). N-linked (GlcNAc...) asparagine glycosylation occurs at Asn104. Cystine bridges form between Cys126-Cys224, Cys136-Cys180, Cys170-Cys213, and Cys272-Cys320. Cys139 is an active-site residue. Active-site residues include His278 and Asn298.

It belongs to the peptidase C1 family. In terms of assembly, monomer.

The protein localises to the lysosome. It localises to the secreted. It is found in the cytoplasmic vesicle. The protein resides in the phagosome. It carries out the reaction Similar to cathepsin L, but with much less activity on Z-Phe-Arg-|-NHMec, and more activity on the Z-Val-Val-Arg-|-Xaa compound.. In terms of biological role, thiol protease. Key protease responsible for the removal of the invariant chain from MHC class II molecules and MHC class II antigen presentation. The bond-specificity of this proteinase is in part similar to the specificities of cathepsin L. The chain is Cathepsin S (CTSS) from Bos taurus (Bovine).